The chain runs to 261 residues: Rho-related GTP-binding protein RhoU (261 aa).

The disordered stretch occupies residues 1-48; it reads MAPQQGRPALPARCEPPAAPPVPPRRERGGRGARGPGVSGGRGRAGGA. The span at 7 to 16 shows a compositional bias: low complexity; sequence RPALPARCEP. Positions 32-48 are enriched in gly residues; the sequence is GARGPGVSGGRGRAGGA. GTP is bound by residues 59 to 66, 106 to 110, and 164 to 167; these read GDGAVGKT, DTAGQ, and TQSD. Glycyl lysine isopeptide (Lys-Gly) (interchain with G-Cter in ubiquitin) cross-links involve residues Lys-180 and Lys-251. The S-palmitoyl cysteine moiety is linked to residue Cys-259.

This sequence belongs to the small GTPase superfamily. Rho family. Interacts with PAK1. Interacts with PAK3. Interacts with ARHGAP30 in a GTP-independent manner. In its GTP-loaded conformation, interacts with ARHGAP31. Interacts with PTK2B/PYK2. Interacts with PAK4; interaction protects RHOU from ubiquitination and subsequent degradation. Requires Mg(2+) as cofactor. Post-translationally, tyrosine phosphorylated by SRC in response to PTK2B/PYK2 activation. In terms of processing, ubiquitinated. 'Lys-48'-linked ubiquitination at Lys-180 and Lys-251 by the ECS(RAB40A) complex leading to its degradation.

The protein resides in the cell membrane. The protein localises to the golgi apparatus membrane. It localises to the cell junction. Its subcellular location is the focal adhesion. It is found in the cell projection. The protein resides in the podosome. Its function is as follows. Binds to and activates protein kinase PAK1. Plays a role in the regulation of cell morphology, cytoskeletal organization and focal adhesion assembly during cell migration. Also stimulates quiescent cells to reenter the cell cycle. Has no detectable GTPase activity but its high intrinsic guanine nucleotide exchange activity suggests it is constitutively GTP-bound. In Mus musculus (Mouse), this protein is Rho-related GTP-binding protein RhoU.